Consider the following 186-residue polypeptide: MTDPSVDEALARRAAQGDQYAFGQLVQRHGRALAQAARSFGVPESDVDDIVQDTFIAAWHALDDFDSDKLFRPWLFRIGLNKMRDLRRFRQVRHFLFGAKDIEDAELTSDVPGPEREVSARLELAKIMQVLNRLDLASREIIILTSFVGMSHPEAAMALGTSAKAVESRVARARAKLTALLQSSQV.

Positions 49–62 (DIVQDTFIAAWHAL) match the Polymerase core binding motif. The H-T-H motif DNA-binding region spans 152–171 (HPEAAMALGTSAKAVESRVA).

It belongs to the sigma-70 factor family. ECF subfamily.

In terms of biological role, sigma factors are initiation factors that promote the attachment of RNA polymerase to specific initiation sites and are then released. This sigma factor regulates the genes for a membrane-located efflux system that confers resistance to nickel, cobalt and cadmium. This Alcaligenes xylosoxydans xylosoxydans (Achromobacter xylosoxidans) protein is RNA polymerase sigma factor NccH (nccH).